A 357-amino-acid polypeptide reads, in one-letter code: DNA replication and repair protein RecF (357 aa).

30–37 (GANGSGKT) contributes to the ATP binding site.

The protein belongs to the RecF family.

It localises to the cytoplasm. Functionally, the RecF protein is involved in DNA metabolism; it is required for DNA replication and normal SOS inducibility. RecF binds preferentially to single-stranded, linear DNA. It also seems to bind ATP. The protein is DNA replication and repair protein RecF of Cronobacter sakazakii (strain ATCC BAA-894) (Enterobacter sakazakii).